Consider the following 229-residue polypeptide: Large ribosomal subunit protein uL1 (229 aa).

This sequence belongs to the universal ribosomal protein uL1 family. As to quaternary structure, part of the 50S ribosomal subunit.

Binds directly to 23S rRNA. The L1 stalk is quite mobile in the ribosome, and is involved in E site tRNA release. Its function is as follows. Protein L1 is also a translational repressor protein, it controls the translation of the L11 operon by binding to its mRNA. The chain is Large ribosomal subunit protein uL1 from Clostridium perfringens (strain ATCC 13124 / DSM 756 / JCM 1290 / NCIMB 6125 / NCTC 8237 / Type A).